A 469-amino-acid chain; its full sequence is MNPNQKIITIGSICMVVGIISLILQIGNIVSIWISHSIQTGNQNHTGTCDQSIITYKNSTWVNQTYVNISNTNVVAGKDTTSVILAGNSSLCPIRGWAIYSKDNGVRIGSKGDVFVIREPFISCSHLECKTFFLTQGALLNDKHSNGTVKDRSPYRALMSCPVGEAPSPYNSRFESVAWSASACHDGMGWLTIGISGPDDGAVAVLKYNGIITETIKSWRKEILRTQESECVCVNGSCFTIMTDGPSGGPASYKIFKIEKGKVTKSIELDAPNSHYEECSCYPDTSKVMCVCRDNWHGSNRPWVSFDQNLDYQMGYICSGVFGDNPRPKDGKGSCGPVNVDGADGVKGFSYRYGNGGWIGRTKSNSSRKGFEMIWDPNGWTDPDSNFLVKQDIVAMTDWSGYSGSFVQHPELTGLDCMRPCFWVELIRGRPKENTIWTSGSSISFCGVNSDTVDWSWPDDAELPLNIDK.

At 1-6 (MNPNQK) the chain is on the intravirion side. Residues 7 to 27 (IITIGSICMVVGIISLILQIG) traverse the membrane as a helical segment. The tract at residues 11 to 33 (GSICMVVGIISLILQIGNIVSIW) is involved in apical transport and lipid raft association. At 28–469 (NIVSIWISHS…DAELPLNIDK (442 aa)) the chain is on the virion surface side. Residues 36-90 (HSIQTGNQNHTGTCDQSIITYKNSTWVNQTYVNISNTNVVAGKDTTSVILAGNSS) are hypervariable stalk region. Asparagine 44, asparagine 58, asparagine 63, asparagine 68, and asparagine 88 each carry an N-linked (GlcNAc...) asparagine; by host glycan. The segment at 91 to 469 (LCPIRGWAIY…DAELPLNIDK (379 aa)) is head of neuraminidase. 8 cysteine pairs are disulfide-bonded: cysteine 92–cysteine 417, cysteine 124–cysteine 129, cysteine 184–cysteine 231, cysteine 233–cysteine 238, cysteine 279–cysteine 292, cysteine 281–cysteine 290, cysteine 318–cysteine 335, and cysteine 421–cysteine 446. Residue arginine 118 participates in substrate binding. N-linked (GlcNAc...) asparagine; by host glycosylation is present at asparagine 146. Aspartate 151 serves as the catalytic Proton donor/acceptor. Substrate is bound at residue arginine 152. N-linked (GlcNAc...) asparagine; by host glycosylation occurs at asparagine 235. Residue 277–278 (EE) coordinates substrate. Arginine 293 is a substrate binding site. Ca(2+)-binding residues include aspartate 294, glycine 298, and aspartate 324. The N-linked (GlcNAc...) asparagine; by host glycan is linked to asparagine 365. Arginine 368 is a substrate binding site. The Nucleophile role is filled by tyrosine 402.

This sequence belongs to the glycosyl hydrolase 34 family. Homotetramer. Ca(2+) serves as cofactor. Post-translationally, N-glycosylated.

It localises to the virion membrane. The protein resides in the host apical cell membrane. The enzyme catalyses Hydrolysis of alpha-(2-&gt;3)-, alpha-(2-&gt;6)-, alpha-(2-&gt;8)- glycosidic linkages of terminal sialic acid residues in oligosaccharides, glycoproteins, glycolipids, colominic acid and synthetic substrates.. With respect to regulation, inhibited by the neuraminidase inhibitors zanamivir (Relenza) and oseltamivir (Tamiflu). These drugs interfere with the release of progeny virus from infected cells and are effective against all influenza strains. Resistance to neuraminidase inhibitors is quite rare. Catalyzes the removal of terminal sialic acid residues from viral and cellular glycoconjugates. Cleaves off the terminal sialic acids on the glycosylated HA during virus budding to facilitate virus release. Additionally helps virus spread through the circulation by further removing sialic acids from the cell surface. These cleavages prevent self-aggregation and ensure the efficient spread of the progeny virus from cell to cell. Otherwise, infection would be limited to one round of replication. Described as a receptor-destroying enzyme because it cleaves a terminal sialic acid from the cellular receptors. May facilitate viral invasion of the upper airways by cleaving the sialic acid moieties on the mucin of the airway epithelial cells. Likely to plays a role in the budding process through its association with lipid rafts during intracellular transport. May additionally display a raft-association independent effect on budding. Plays a role in the determination of host range restriction on replication and virulence. Sialidase activity in late endosome/lysosome traffic seems to enhance virus replication. The chain is Neuraminidase from Influenza A virus (strain A/Fort Monmouth/1/1947 H1N1).